The primary structure comprises 40 residues: Photosystem II reaction center protein J (40 aa).

The chain crosses the membrane as a helical span at residues 8 to 28; sequence IPLWLIGTVAGIPVIGLVGVF.

Belongs to the PsbJ family. As to quaternary structure, PSII is composed of 1 copy each of membrane proteins PsbA, PsbB, PsbC, PsbD, PsbE, PsbF, PsbH, PsbI, PsbJ, PsbK, PsbL, PsbM, PsbT, PsbX, PsbY, PsbZ, Psb30/Ycf12, at least 3 peripheral proteins of the oxygen-evolving complex and a large number of cofactors. It forms dimeric complexes.

The protein resides in the plastid. It localises to the chloroplast thylakoid membrane. Its function is as follows. One of the components of the core complex of photosystem II (PSII). PSII is a light-driven water:plastoquinone oxidoreductase that uses light energy to abstract electrons from H(2)O, generating O(2) and a proton gradient subsequently used for ATP formation. It consists of a core antenna complex that captures photons, and an electron transfer chain that converts photonic excitation into a charge separation. The sequence is that of Photosystem II reaction center protein J from Hordeum jubatum (Foxtail barley).